The following is a 61-amino-acid chain: Large ribosomal subunit protein uL30 (61 aa).

It belongs to the universal ribosomal protein uL30 family. In terms of assembly, part of the 50S ribosomal subunit.

In Thermobifida fusca (strain YX), this protein is Large ribosomal subunit protein uL30.